A 58-amino-acid chain; its full sequence is Large ribosomal subunit protein uL30 (58 aa).

Belongs to the universal ribosomal protein uL30 family. As to quaternary structure, part of the 50S ribosomal subunit.

This Trichlorobacter lovleyi (strain ATCC BAA-1151 / DSM 17278 / SZ) (Geobacter lovleyi) protein is Large ribosomal subunit protein uL30.